Reading from the N-terminus, the 95-residue chain is Integration host factor subunit alpha (95 aa).

Residues 51 to 71 (NFDLRDKNERPGRNPKTGEDI) are disordered. The span at 53-69 (DLRDKNERPGRNPKTGE) shows a compositional bias: basic and acidic residues.

Belongs to the bacterial histone-like protein family. Heterodimer of an alpha and a beta chain.

Functionally, this protein is one of the two subunits of integration host factor, a specific DNA-binding protein that functions in genetic recombination as well as in transcriptional and translational control. The protein is Integration host factor subunit alpha of Vibrio vulnificus (strain CMCP6).